The chain runs to 272 residues: Shikimate dehydrogenase (NADP(+)) (272 aa).

Residues 14–16 (SKS) and T61 each bind shikimate. K65 serves as the catalytic Proton acceptor. NADP(+) is bound at residue E77. Shikimate is bound by residues N86 and D102. NADP(+)-binding positions include 126 to 130 (GAGGA), 149 to 154 (NRTVSR), and M213. Residue Y215 participates in shikimate binding. G237 serves as a coordination point for NADP(+).

It belongs to the shikimate dehydrogenase family. As to quaternary structure, homodimer.

It catalyses the reaction shikimate + NADP(+) = 3-dehydroshikimate + NADPH + H(+). The protein operates within metabolic intermediate biosynthesis; chorismate biosynthesis; chorismate from D-erythrose 4-phosphate and phosphoenolpyruvate: step 4/7. In terms of biological role, involved in the biosynthesis of the chorismate, which leads to the biosynthesis of aromatic amino acids. Catalyzes the reversible NADPH linked reduction of 3-dehydroshikimate (DHSA) to yield shikimate (SA). The polypeptide is Shikimate dehydrogenase (NADP(+)) (Escherichia coli O7:K1 (strain IAI39 / ExPEC)).